Reading from the N-terminus, the 579-residue chain is Insulin-like growth factor 2 mRNA-binding protein 3 (579 aa).

2 consecutive RRM domains span residues 2 to 75 and 81 to 156; these read NKLY…HSVP and RKLQ…YIPD. Residues 158–192 are disordered; it reads TAAQQNPSPQLRGRRGPGQRGSSRQASPGSVSKQK. Serine 165 carries the post-translational modification Phosphoserine. Serine 184 carries the phosphoserine; by MTOR modification. KH domains lie at 195–260, 276–343, and 405–470; these read DLPL…CKSI, EIPL…EEEI, and TETV…QGRI. Residues lysine 450 and lysine 475 each participate in a glycyl lysine isopeptide (Lys-Gly) (interchain with G-Cter in SUMO2) cross-link. One can recognise a KH 4 domain in the interval 487–553; that stretch reads KLEAHIRVPS…YACQVAQRKI (67 aa). Phosphothreonine is present on threonine 528.

The protein belongs to the RRM IMP/VICKZ family. Can form homooligomers and heterooligomers with IGF2BP1 and IGF2BP3 in an RNA-dependent manner. Interacts with IGF2BP1. Interacts with ELAVL1, DHX9, HNRNPU, MATR3 and PABPC1. As to expression, expressed in oocytes, spermatogonia and spermatocytes (at protein level).

It is found in the nucleus. The protein resides in the cytoplasm. Its subcellular location is the P-body. The protein localises to the stress granule. RNA-binding factor that may recruit target transcripts to cytoplasmic protein-RNA complexes (mRNPs). This transcript 'caging' into mRNPs allows mRNA transport and transient storage. It also modulates the rate and location at which target transcripts encounter the translational apparatus and shields them from endonuclease attacks or microRNA-mediated degradation. Preferentially binds to N6-methyladenosine (m6A)-containing mRNAs and increases their stability. Binds to the 3'-UTR of CD44 mRNA and stabilizes it, hence promotes cell adhesion and invadopodia formation. Binds to beta-actin/ACTB and MYC transcripts. Increases MYC mRNA stability by binding to the coding region instability determinant (CRD) and binding is enhanced by m6A-modification of the CRD. Binds to the 5'-UTR of the insulin-like growth factor 2 (IGF2) mRNAs. This is Insulin-like growth factor 2 mRNA-binding protein 3 (Igf2bp3) from Mus musculus (Mouse).